The chain runs to 73 residues: MNDLALALGLGIPLSLLVGVIIGYFISIKIFKKQIRDNPPITENQIKAMYAKMGRKLSETQVKEIMRSIKNQK.

Residues 6-26 traverse the membrane as a helical segment; that stretch reads LALGLGIPLSLLVGVIIGYFI.

The protein belongs to the UPF0154 family.

It is found in the membrane. The protein is UPF0154 protein MG335.1 homolog of Mycoplasma pneumoniae (strain ATCC 29342 / M129 / Subtype 1) (Mycoplasmoides pneumoniae).